Reading from the N-terminus, the 488-residue chain is Glutamyl-tRNA(Gln) amidotransferase subunit A (488 aa).

Catalysis depends on charge relay system residues Lys-77 and Ser-152. Catalysis depends on Ser-176, which acts as the Acyl-ester intermediate.

Belongs to the amidase family. GatA subfamily. In terms of assembly, heterotrimer of A, B and C subunits.

It carries out the reaction L-glutamyl-tRNA(Gln) + L-glutamine + ATP + H2O = L-glutaminyl-tRNA(Gln) + L-glutamate + ADP + phosphate + H(+). Functionally, allows the formation of correctly charged Gln-tRNA(Gln) through the transamidation of misacylated Glu-tRNA(Gln) in organisms which lack glutaminyl-tRNA synthetase. The reaction takes place in the presence of glutamine and ATP through an activated gamma-phospho-Glu-tRNA(Gln). The chain is Glutamyl-tRNA(Gln) amidotransferase subunit A from Latilactobacillus sakei subsp. sakei (strain 23K) (Lactobacillus sakei subsp. sakei).